Reading from the N-terminus, the 192-residue chain is Ribosomal RNA large subunit methyltransferase E (192 aa).

5 residues coordinate S-adenosyl-L-methionine: Gly46, Trp48, Asp63, Asp79, and Asp102. The active-site Proton acceptor is the Lys142.

This sequence belongs to the class I-like SAM-binding methyltransferase superfamily. RNA methyltransferase RlmE family.

Its subcellular location is the cytoplasm. The catalysed reaction is uridine(2552) in 23S rRNA + S-adenosyl-L-methionine = 2'-O-methyluridine(2552) in 23S rRNA + S-adenosyl-L-homocysteine + H(+). Specifically methylates the uridine in position 2552 of 23S rRNA at the 2'-O position of the ribose in the fully assembled 50S ribosomal subunit. This Wolbachia pipientis wMel protein is Ribosomal RNA large subunit methyltransferase E.